The primary structure comprises 489 residues: MSFNINWDSIQKESLSAWTAELLNDALNSGKRPNVLCTDIQIEDLSFGTIPPDFEILEIGDLSSDSFRGIFKFNYDGDASITLRTKVQANPLKIYEDNLLDQFEDDQRELGEFIKPRFVMATDILEIPLNLKLSQIKLSSIIIIVFSRSKGLTLVFKNDPLESISVSSTFDRIKPLARFLQNKIETQISELFKEFLPSVLYKFSQKYTTENFADFHRELLHTQHPERNTENRVTLQDIDPEAPLIISPGSLMRLTTLSSSRQTLTLGGKISADKLNPDIITKNYFNELIPKTYNKFQLKADKVADIAQNIHSIKNLQSRIFWKNSKNNDKPHRRVVCLGDKDKSKEKCKQVESESLYRRSVYSQGSIFNDGASDVSTLTESTEVEQEAPNTEFPKLQAVDLKPDMSVETIIQNSSQEKHRKVKPIDDIGLIGRRKERLRELLKYDVVDFSMPPMPGSPTKFFNTNIFHDSNHINNGNLPIRVAPPPYQC.

In terms of domain architecture, SMP-LTD spans 1-205 (MSFNINWDSI…LPSVLYKFSQ (205 aa)).

This sequence belongs to the MDM34 family. In terms of assembly, component of the ER-mitochondria encounter structure (ERMES) or MDM complex, composed of MMM1, MDM10, MDM12 and MDM34.

The protein localises to the mitochondrion outer membrane. In terms of biological role, component of the ERMES/MDM complex, which serves as a molecular tether to connect the endoplasmic reticulum (ER) and mitochondria. Components of this complex are involved in the control of mitochondrial shape and protein biogenesis, and function in nonvesicular lipid trafficking between the ER and mitochondria. MDM34 is required for the interaction of the ER-resident membrane protein MMM1 and the outer mitochondrial membrane-resident beta-barrel protein MDM10. This Komagataella phaffii (strain GS115 / ATCC 20864) (Yeast) protein is Mitochondrial distribution and morphology protein 34.